A 498-amino-acid polypeptide reads, in one-letter code: Type II secretion system protein E (498 aa).

Residue 261-268 participates in ATP binding; sequence GPTGSGKS. 4 residues coordinate Zn(2+): C394, C397, C425, and C428.

This sequence belongs to the GSP E family. As to quaternary structure, forms homooligomers; most probably hexamers. Interacts with OutL/GspL. The cofactor is Zn(2+).

The protein resides in the cell inner membrane. It catalyses the reaction ATP + H2O + cellular proteinSide 1 = ADP + phosphate + cellular proteinSide 2.. ATPase component of the type II secretion system required for the energy-dependent secretion of extracellular factors such as proteases and toxins from the periplasm. Acts as a molecular motor to provide the energy that is required for assembly of the pseudopilus and the extrusion of substrates generated in the cytoplasm. The protein is Type II secretion system protein E (outE) of Pectobacterium carotovorum subsp. carotovorum (Erwinia carotovora subsp. carotovora).